Consider the following 213-residue polypeptide: NAD(P)H-hydrate epimerase (213 aa).

In terms of domain architecture, YjeF N-terminal spans 8 to 210 (MYNIEENGHA…KIGIPPEAEK (203 aa)). (6S)-NADPHX is bound at residue 55 to 59 (NNGGD). K(+)-binding residues include Asn56 and Asp122. (6S)-NADPHX is bound by residues 126-132 (GTGITGE), Tyr137, and Asp155. Ser158 lines the K(+) pocket.

This sequence belongs to the NnrE/AIBP family. The cofactor is K(+).

The enzyme catalyses (6R)-NADHX = (6S)-NADHX. The catalysed reaction is (6R)-NADPHX = (6S)-NADPHX. Catalyzes the epimerization of the S- and R-forms of NAD(P)HX, a damaged form of NAD(P)H that is a result of enzymatic or heat-dependent hydration. This is a prerequisite for the S-specific NAD(P)H-hydrate dehydratase to allow the repair of both epimers of NAD(P)HX. The sequence is that of NAD(P)H-hydrate epimerase from Cenarchaeum symbiosum (strain A).